The primary structure comprises 447 residues: Probable ribosomal RNA small subunit methyltransferase B (447 aa).

Residues 259-265 (CAAPGGK), Asp-283, Asp-310, and Asp-329 contribute to the S-adenosyl-L-methionine site. Cys-382 acts as the Nucleophile in catalysis.

The protein belongs to the class I-like SAM-binding methyltransferase superfamily. RsmB/NOP family.

The protein resides in the cytoplasm. The enzyme catalyses cytidine(967) in 16S rRNA + S-adenosyl-L-methionine = 5-methylcytidine(967) in 16S rRNA + S-adenosyl-L-homocysteine + H(+). Its function is as follows. Specifically methylates the cytosine at position 967 (m5C967) of 16S rRNA. The sequence is that of Probable ribosomal RNA small subunit methyltransferase B from Bacillus subtilis (strain 168).